A 206-amino-acid chain; its full sequence is Guanylyl cyclase inhibitory protein (206 aa).

Glycine 2 carries the N-myristoyl glycine lipid modification. EF-hand domains are found at residues 31 to 49 (SGLITLHEFRQFFSDVTVG), 51 to 86 (NSSEYAEQIFRALDNNGDGIVDFREYVTAISMLAHG), 87 to 122 (TPEDKLKWSFKLYDKDGDGAITRSEMLEIMRAVYKM), and 135 to 170 (TAEECTNRIFVRLDKDQNAIISLQEFVDGSLGDEWV). Ca(2+)-binding residues include aspartate 64, asparagine 66, aspartate 68, glutamate 75, aspartate 100, aspartate 102, aspartate 104, and glutamate 111.

Retina; inner segments, somata and synaptic terminals of cone receptors.

In terms of biological role, does not stimulate guanylyl cyclase (GC) when free calcium ion concentration is low, but inhibits GC when free calcium ions concentration is elevated. The polypeptide is Guanylyl cyclase inhibitory protein (GCIP) (Lithobates pipiens (Northern leopard frog)).